The sequence spans 66 residues: UPF0370 protein YpfN (66 aa).

Residues 4–24 (LAKYWWILVLVFLVGVLLNVI) form a helical membrane-spanning segment. Residues 39 to 66 (KPELPPHRDFNDKWDDEDDWPKKDQSKK) are disordered. The segment covering 42-51 (LPPHRDFNDK) has biased composition (basic and acidic residues).

The protein belongs to the UPF0370 family.

Its subcellular location is the cell membrane. In Salmonella arizonae (strain ATCC BAA-731 / CDC346-86 / RSK2980), this protein is UPF0370 protein YpfN.